A 361-amino-acid chain; its full sequence is 3-dehydroquinate synthase (361 aa).

Residues 73–78, 107–111, 131–132, Lys-144, Lys-153, and 171–174 each bind NAD(+); these read DAEAGK, GAATD, TT, and TLET. 3 residues coordinate Zn(2+): Glu-186, His-249, and His-265.

The protein belongs to the sugar phosphate cyclases superfamily. Dehydroquinate synthase family. NAD(+) serves as cofactor. It depends on Co(2+) as a cofactor. The cofactor is Zn(2+).

Its subcellular location is the cytoplasm. The catalysed reaction is 7-phospho-2-dehydro-3-deoxy-D-arabino-heptonate = 3-dehydroquinate + phosphate. Its pathway is metabolic intermediate biosynthesis; chorismate biosynthesis; chorismate from D-erythrose 4-phosphate and phosphoenolpyruvate: step 2/7. Its function is as follows. Catalyzes the conversion of 3-deoxy-D-arabino-heptulosonate 7-phosphate (DAHP) to dehydroquinate (DHQ). The protein is 3-dehydroquinate synthase of Mycobacterium leprae (strain TN).